Consider the following 82-residue polypeptide: MTRILLLLLRFYQYFISPLLGNNCRFHLTCSEYAKEAISMHGSIKGLWFTFKRIIKCQPFCDGGYDTVPISIKNSKPLNKKI.

Belongs to the UPF0161 family.

The protein resides in the cell inner membrane. Functionally, could be involved in insertion of integral membrane proteins into the membrane. The polypeptide is Putative membrane protein insertion efficiency factor (Rickettsia peacockii (strain Rustic)).